The sequence spans 305 residues: Hydrogen peroxide-inducible genes activator (305 aa).

Residues 1-58 (MNIRDLEYLVALAEHRHFRRAADSCHVSQPTLSGQIRKLEDELGVMLLERTSRKVLFT) enclose the HTH lysR-type domain. The H-T-H motif DNA-binding region spans 18–37 (FRRAADSCHVSQPTLSGQIR). 2 cysteine pairs are disulfide-bonded: Cys180-Cys259 and Cys199-Cys208. The residue at position 199 (Cys199) is a Cysteine sulfenic acid (-SOH); alternate. S-glutathionyl cysteine; alternate is present on Cys199. The residue at position 199 (Cys199) is an S-nitrosocysteine; alternate.

The protein belongs to the LysR transcriptional regulatory family. In terms of assembly, homodimer and homotetramer. Oxidized on Cys-199; the Cys-SOH formed in response to oxidative signaling triggers a conformational change and the onset of transcriptional activity with a specific DNA-binding affinity. Cys-199-SOH rapidly reacts with Cys-208-SH to form a disulfide bond. Post-translationally, S-nitrosylation in response to nitrosative signaling triggers a conformational change and the onset of transcriptional activity with a specific DNA-binding affinity. In terms of processing, glutathionylation in response to redox signaling triggers the onset of transcriptional activity with a specific DNA-binding affinity.

Activated by oxidation of Cys-199 resulting in the alternative formation of cystine, sulfenic acid, S-nitroso- or glutathione-bound cysteine. Functionally, hydrogen peroxide sensor. Activates the expression of a regulon of hydrogen peroxide-inducible genes such as katG, gor, ahpC, ahpF, oxyS (a regulatory RNA), dps, fur and grxA. OxyR expression is negatively autoregulated by binding to a 43 bp region upstream of its own coding sequence. OxyR is inactivated by reduction of its essential disulfide bond by the product of GrxA, itself positively regulated by OxyR. Also has a positive regulatory effect on the production of surface proteins that control the colony morphology and auto-aggregation ability. The chain is Hydrogen peroxide-inducible genes activator (oxyR) from Escherichia coli O157:H7.